The primary structure comprises 163 residues: Extracellular giant hemoglobin major globin subunit B2 (163 aa).

A signal peptide spans 1-16 (MIALFVLMGLMAAASA). The region spanning 19–163 (CCSSEDRANV…RIANGISAGL (145 aa)) is the Globin domain. Cys20 and Cys151 are joined by a disulfide. Cys83 provides a ligand contact to hydrogen sulfide. A heme b-binding site is contributed by His114.

Belongs to the globin family. The 400 kDa hemoglobin consists of a spherical 24-mer arranged as a double layer of dome-shaped dodecamers. Each dodecamer is composed of the 3-fold trimer of the tetramer A1-A2-B1-B2 having one intra-tetramer (A1-B2) disulfide bond and one inter-tetramer (B1-B2) disulfide bond per tetramer.

Its subcellular location is the secreted. Functionally, the extracellular giant hemoglobin is able to bind and transport oxygen and hydrosulfide simultaneously and reversibly at two different sites. This Oligobrachia mashikoi (Beard worm) protein is Extracellular giant hemoglobin major globin subunit B2 (ghbB2).